The following is an 88-amino-acid chain: Small ribosomal subunit protein bS20 (88 aa).

The segment at 1–27 is disordered; sequence MANSKSAKKRALQSEKRRQHNASRRSM.

This sequence belongs to the bacterial ribosomal protein bS20 family.

Functionally, binds directly to 16S ribosomal RNA. The polypeptide is Small ribosomal subunit protein bS20 (Shewanella sp. (strain ANA-3)).